The following is a 357-amino-acid chain: Pre-mRNA-splicing factor RBM22 homolog (357 aa).

Residues 153–180 (RNMARVCSFWRKNSCNRGDECPYLHKEI) form a C3H1-type zinc finger. The region spanning 222-295 (NKICIQGISE…CNLTVHLQDN (74 aa)) is the RRM domain.

This sequence belongs to the SLT11 family. Probable component of the spliceosome C complex.

The protein localises to the nucleus. In terms of biological role, involved in pre-mRNA splicing. Binds RNA. This is Pre-mRNA-splicing factor RBM22 homolog from Plasmodium falciparum (isolate 3D7).